We begin with the raw amino-acid sequence, 302 residues long: Methionyl-tRNA formyltransferase (302 aa).

Serine 109–proline 112 is a (6S)-5,6,7,8-tetrahydrofolate binding site.

This sequence belongs to the Fmt family.

The enzyme catalyses L-methionyl-tRNA(fMet) + (6R)-10-formyltetrahydrofolate = N-formyl-L-methionyl-tRNA(fMet) + (6S)-5,6,7,8-tetrahydrofolate + H(+). Functionally, attaches a formyl group to the free amino group of methionyl-tRNA(fMet). The formyl group appears to play a dual role in the initiator identity of N-formylmethionyl-tRNA by promoting its recognition by IF2 and preventing the misappropriation of this tRNA by the elongation apparatus. In Campylobacter hominis (strain ATCC BAA-381 / DSM 21671 / CCUG 45161 / LMG 19568 / NCTC 13146 / CH001A), this protein is Methionyl-tRNA formyltransferase.